The primary structure comprises 45 residues: MPMATTIDGTDYTNIMPITVFTTVYLGVFIGIDTSTTGFTCFSRY.

It belongs to the coronaviruses ns4/ns4.8 protein family.

The polypeptide is Non-structural protein of 4.8 kDa (Bovine coronavirus (strain OK-0514) (BCoV)).